A 61-amino-acid chain; its full sequence is Small ribosomal subunit protein uS14 (61 aa).

Residues C24, C27, C40, and C43 each coordinate Zn(2+).

This sequence belongs to the universal ribosomal protein uS14 family. Zinc-binding uS14 subfamily. Part of the 30S ribosomal subunit. Contacts proteins S3 and S10. The cofactor is Zn(2+).

Functionally, binds 16S rRNA, required for the assembly of 30S particles and may also be responsible for determining the conformation of the 16S rRNA at the A site. The protein is Small ribosomal subunit protein uS14 of Geobacillus thermodenitrificans (strain NG80-2).